The primary structure comprises 128 residues: Small ribosomal subunit protein uS9 (128 aa).

A compositionally biased stretch (basic and acidic residues) spans 97–113 (RSEGFMTRDPRSVERKK). A disordered region spans residues 97–128 (RSEGFMTRDPRSVERKKPGQPKARRRFQFSKR). Over residues 114 to 128 (PGQPKARRRFQFSKR) the composition is skewed to basic residues.

This sequence belongs to the universal ribosomal protein uS9 family.

The polypeptide is Small ribosomal subunit protein uS9 (Bacteroides fragilis (strain ATCC 25285 / DSM 2151 / CCUG 4856 / JCM 11019 / LMG 10263 / NCTC 9343 / Onslow / VPI 2553 / EN-2)).